A 70-amino-acid chain; its full sequence is MRSIISLLLISAMVFSMIAAVPEEEGLQLSEDERGGCLPHNRFCNALSGPRCFSGLRCKELSIWDSRCLG.

The signal sequence occupies residues 1-20 (MRSIISLLLISAMVFSMIAA). Residues 21 to 34 (VPEEEGLQLSEDER) constitute a propeptide that is removed on maturation. 2 disulfide bridges follow: Cys44–Cys58 and Cys52–Cys68. The residue at position 69 (Leu69) is a Leucine amide.

The protein belongs to the neurotoxin 01 (U2-agtx) family. Post-translationally, does not contain a cysteine at position 53 which disrupts the cysteine framework. As to expression, expressed by the venom gland.

It is found in the secreted. Its function is as follows. Insect active toxin causing rapid but reversible paralysis in crickets. No activity shown in mammals. Does not show effect on mammalian voltage-gated calcium channels. The protein is U2-agatoxin-Ao1q of Agelena orientalis (Funnel-web spider).